The primary structure comprises 116 residues: Aspartate 1-decarboxylase (116 aa).

The active-site Schiff-base intermediate with substrate; via pyruvic acid is Ser-25. A Pyruvic acid (Ser) modification is found at Ser-25. A substrate-binding site is contributed by Thr-57. Tyr-58 (proton donor) is an active-site residue. Gly-72 to Ala-74 contacts substrate.

This sequence belongs to the PanD family. In terms of assembly, heterooctamer of four alpha and four beta subunits. Requires pyruvate as cofactor. Post-translationally, is synthesized initially as an inactive proenzyme, which is activated by self-cleavage at a specific serine bond to produce a beta-subunit with a hydroxyl group at its C-terminus and an alpha-subunit with a pyruvoyl group at its N-terminus.

It localises to the cytoplasm. It catalyses the reaction L-aspartate + H(+) = beta-alanine + CO2. It functions in the pathway cofactor biosynthesis; (R)-pantothenate biosynthesis; beta-alanine from L-aspartate: step 1/1. Catalyzes the pyruvoyl-dependent decarboxylation of aspartate to produce beta-alanine. The protein is Aspartate 1-decarboxylase of Helicobacter acinonychis (strain Sheeba).